Reading from the N-terminus, the 72-residue chain is Sperm protein associated with the nucleus on the X chromosome N1 (72 aa).

A disordered region spans residues Met1 to Lys44.

This sequence belongs to the SPAN-X family.

The chain is Sperm protein associated with the nucleus on the X chromosome N1 (SPANXN1) from Homo sapiens (Human).